The chain runs to 860 residues: Leucine--tRNA ligase (860 aa).

Positions 42–52 (PYPSGRLHMGH) match the 'HIGH' region motif. The short motif at 619 to 623 (KMSKS) is the 'KMSKS' region element. K622 provides a ligand contact to ATP.

The protein belongs to the class-I aminoacyl-tRNA synthetase family.

Its subcellular location is the cytoplasm. It carries out the reaction tRNA(Leu) + L-leucine + ATP = L-leucyl-tRNA(Leu) + AMP + diphosphate. The chain is Leucine--tRNA ligase from Klebsiella pneumoniae subsp. pneumoniae (strain ATCC 700721 / MGH 78578).